The sequence spans 139 residues: ATP synthase epsilon chain (139 aa).

This sequence belongs to the ATPase epsilon chain family. As to quaternary structure, F-type ATPases have 2 components, CF(1) - the catalytic core - and CF(0) - the membrane proton channel. CF(1) has five subunits: alpha(3), beta(3), gamma(1), delta(1), epsilon(1). CF(0) has three main subunits: a, b and c.

Its subcellular location is the cell inner membrane. Its function is as follows. Produces ATP from ADP in the presence of a proton gradient across the membrane. This chain is ATP synthase epsilon chain, found in Pseudomonas putida (strain GB-1).